Reading from the N-terminus, the 185-residue chain is Elongation factor P (185 aa).

It belongs to the elongation factor P family.

It localises to the cytoplasm. The protein operates within protein biosynthesis; polypeptide chain elongation. Functionally, involved in peptide bond synthesis. Stimulates efficient translation and peptide-bond synthesis on native or reconstituted 70S ribosomes in vitro. Probably functions indirectly by altering the affinity of the ribosome for aminoacyl-tRNA, thus increasing their reactivity as acceptors for peptidyl transferase. The sequence is that of Elongation factor P (efp) from Thermotoga maritima (strain ATCC 43589 / DSM 3109 / JCM 10099 / NBRC 100826 / MSB8).